Reading from the N-terminus, the 88-residue chain is MKAVDVLISGRVQKVGYRAFTRKNALLLGIKGYVENMPDGKVHAVLEGDDHQIDKLLELLRQGPVVSQVRDIKVTEIERAGHQGFEVR.

Positions 3–88 (AVDVLISGRV…RAGHQGFEVR (86 aa)) constitute an Acylphosphatase-like domain. Catalysis depends on residues arginine 18 and asparagine 36.

It belongs to the acylphosphatase family.

The enzyme catalyses an acyl phosphate + H2O = a carboxylate + phosphate + H(+). This Methanocella arvoryzae (strain DSM 22066 / NBRC 105507 / MRE50) protein is Acylphosphatase (acyP).